The sequence spans 430 residues: MSGAEQQQIVPANNGDENWKAGLNLPAKDRRFKTADVTDTKGVEFEDFCLGRDLLMGIFEKGWEKPSPIQEASIGVALTGQDILARAKNGTGKTGAYCIPVIEKIQPALKAIQAMVIVPTRELALQTSQICVELSKHIQLKVMVTTGGTDLRDDIMRLNGTVHLVIATPGRILDLMEKGVAKMEHCKTLVLDEADKLLSQDFQGILDRLINFLPKERQVMLYSATFPNTVTSFMQKHMHKPYEINLMEELTLLGVTQYYAFVQEKQKVHCLNTLFRKLQINQSIIFCNSTQRVELLAKKITEIGYSCYYIHSKMAQNHRNRVFHDFRQGNCRNLVCSDLLTRGIDIQAVNVVINFDFPRNAETYLHRIGRSGRFGHLGVAINLITYEDRHTLRRIEQELRTRIEPIPKTVDPKLYVADQQLVDAADETTA.

Positions 43-71 (VEFEDFCLGRDLLMGIFEKGWEKPSPIQE) match the Q motif motif. Residues 74-244 (IGVALTGQDI…QKHMHKPYEI (171 aa)) enclose the Helicase ATP-binding domain. ATP is bound at residue 87–94 (AKNGTGKT). Positions 192–195 (DEAD) match the DEAD box motif. Residues 254 to 414 (GVTQYYAFVQ…PIPKTVDPKL (161 aa)) enclose the Helicase C-terminal domain.

This sequence belongs to the DEAD box helicase family. DDX6/DHH1 subfamily. In terms of assembly, interacts with car-1 in a germline ribonucleoprotein complex. Interacts with ifet-1. Interacts with oma-1, which is a component of a ribonucleoprotein complex, in an RNA-dependent manner. Expression is restricted to two germline precursors Z2 and Z3 in L1 stage hermaphrodites, and is detectable specifically in the gonad at low levels into the L3 stage. Expression is significantly higher during the early L4 stage. In adults, expression remains gonad-specific and was not apparent in the somatically derived uterus. Expressed in germ granules (P granules); when associated with pgl-1.

Its subcellular location is the cytoplasm. It catalyses the reaction ATP + H2O = ADP + phosphate + H(+). In terms of biological role, probable RNA helicase required for oocyte and sperm function. Also required to prevent the physiological germline apoptosis mechanism killing essentially all developing oocytes. This is ATP-dependent RNA helicase cgh-1 (cgh-1) from Caenorhabditis elegans.